Here is a 231-residue protein sequence, read N- to C-terminus: Equistatin (231 aa).

An N-terminal signal peptide occupies residues 1–32; sequence MALSQNQAKFSKGFVVMIWVLFIACAITSTEA. 3 consecutive Thyroglobulin type-1 domains span residues 34-95, 102-163, and 167-231; these read LTKC…SPDC, LTLC…RPTC, and LSEC…RPTC. 9 cysteine pairs are disulfide-bonded: C37-C56, C67-C74, C76-C95, C105-C124, C135-C142, C144-C163, C170-C191, C202-C209, and C211-C231.

Belongs to the protease inhibitor I31 family.

The protein localises to the secreted. Potent inhibitor of papain-like cysteine proteinases (Ki=0.18-0.57 nM on papain), as well as of the aspartic proteinase cathepsin D (Ki=0.3-05 nM). In Actinia equina (Beadlet anemone), this protein is Equistatin.